A 3419-amino-acid chain; its full sequence is Genome polyprotein (3419 aa).

The segment at methionine 1 to asparagine 25 is disordered. At methionine 1–arginine 104 the chain is on the cytoplasmic side. The interval leucine 37–valine 72 is hydrophobic; homodimerization of capsid protein C. Residues glycine 105–alanine 122 constitute a propeptide, ER anchor for capsid protein C, removed in mature form by serine protease NS3. Residues glycine 105 to isoleucine 125 traverse the membrane as a helical segment. The Extracellular portion of the chain corresponds to threonine 126 to asparagine 249. An N-linked (GlcNAc...) asparagine; by host glycan is attached at asparagine 192. Residues tryptophan 250–glycine 269 form a helical membrane-spanning segment. Residues serine 270–glutamine 274 are Cytoplasmic-facing. The helical transmembrane segment at lysine 275–serine 290 threads the bilayer. Residues isoleucine 291–serine 741 lie on the Extracellular side of the membrane. Cysteine 293 and cysteine 320 form a disulfide bridge. Lysine 328 is covalently cross-linked (Glycyl lysine isopeptide (Lys-Gly) (interchain with G-Cter in ubiquitin)). Disulfide bonds link cysteine 350–cysteine 406, cysteine 350–cysteine 411, cysteine 364–cysteine 395, cysteine 382–cysteine 406, cysteine 382–cysteine 411, cysteine 476–cysteine 577, and cysteine 594–cysteine 625. The fusion peptide stretch occupies residues aspartate 388–glycine 401. Lysine 567 is covalently cross-linked (Glycyl lysine isopeptide (Lys-Gly) (interchain with G-Cter in ubiquitin)). A helical membrane pass occupies residues leucine 742–leucine 763. Over asparagine 764–serine 769 the chain is Cytoplasmic. Residues isoleucine 770–alanine 790 traverse the membrane as a helical segment. Over aspartate 791–lysine 1173 the chain is Lumenal. 6 disulfides stabilise this stretch: cysteine 794–cysteine 805, cysteine 845–cysteine 933, cysteine 969–cysteine 1013, cysteine 1070–cysteine 1119, cysteine 1081–cysteine 1102, and cysteine 1103–cysteine 1106. Residues asparagine 920 and asparagine 997 are each glycosylated (N-linked (GlcNAc...) asparagine; by host). A helical membrane pass occupies residues isoleucine 1174–serine 1194. Residues aspartate 1195–valine 1216 are Cytoplasmic-facing. The chain crosses the membrane as a helical span at residues alanine 1217–phenylalanine 1237. The Lumenal segment spans residues arginine 1238–aspartate 1266. Residues leucine 1267–proline 1287 traverse the membrane as a helical segment. The Cytoplasmic segment spans residues arginine 1288–asparagine 1291. Residues isoleucine 1292–tryptophan 1312 traverse the membrane as a helical segment. Residues arginine 1313–methionine 1341 lie on the Lumenal side of the membrane. The chain crosses the membrane as a helical span at residues alanine 1342 to leucine 1362. Over threonine 1363–serine 1369 the chain is Cytoplasmic. The helical transmembrane segment at tryptophan 1370–alanine 1390 threads the bilayer. Residues lysine 1391–aspartate 1393 are Lumenal-facing. A helical transmembrane segment spans residues isoleucine 1394–glycine 1414. Topologically, residues lysine 1415–lysine 1468 are cytoplasmic. Residues isoleucine 1421–proline 1460 form an interacts with and activates NS3 protease region. The interval glycine 1425–aspartate 1447 is disordered. Positions valine 1469–tryptophan 1489 form an intramembrane region, helical. Over tyrosine 1490–threonine 2166 the chain is Lumenal. Residues serine 1499–cysteine 1676 enclose the Peptidase S7 domain. Catalysis depends on charge relay system; for serine protease NS3 activity residues histidine 1549, aspartate 1573, and serine 1633. The 157-residue stretch at proline 1679 to glutamate 1835 folds into the Helicase ATP-binding domain. Residues lysine 1683–glutamine 1686 form an important for RNA-binding region. Residue leucine 1692–threonine 1699 coordinates ATP. Residues aspartate 1783–histidine 1786 carry the DEAH box motif. Residues proline 1830 to glutamate 2009 enclose the Helicase C-terminal domain. N6-acetyllysine; by host is present on lysine 1887. The chain crosses the membrane as a helical span at residues leucine 2167–leucine 2187. The Lumenal segment spans residues methionine 2188–lysine 2191. The segment at residues glycine 2192–leucine 2212 is an intramembrane region (helical). Over serine 2213–glutamate 2214 the chain is Cytoplasmic. The chain crosses the membrane as a helical span at residues isoleucine 2215 to isoleucine 2235. Over proline 2236–alanine 2250 the chain is Lumenal. Residues isoleucine 2251–alanine 2265 constitute an intramembrane region (helical). Topologically, residues asparagine 2266–serine 2303 are lumenal. The segment at residues alanine 2304 to threonine 2324 is an intramembrane region (helical). Residues threonine 2325–glycine 2340 are Lumenal-facing. Residues valine 2341–leucine 2361 traverse the membrane as a helical segment. Topologically, residues methionine 2362–proline 2371 are cytoplasmic. A helical membrane pass occupies residues leucine 2372–leucine 2392. At glutamine 2393–glutamine 2437 the chain is on the lumenal side. A helical transmembrane segment spans residues valine 2438–glycine 2458. The Cytoplasmic portion of the chain corresponds to glutamate 2459–leucine 3419. The mRNA cap 0-1 NS5-type MT domain maps to glycine 2517–alanine 2781. The mRNA site is built by lysine 2529, leucine 2532, asparagine 2533, methionine 2535, phenylalanine 2540, and lysine 2544. Residue lysine 2529–methionine 2535 participates in GTP binding. Serine 2572 contacts S-adenosyl-L-methionine. Residue serine 2572 is modified to Phosphoserine. Catalysis depends on lysine 2577, which acts as the For 2'-O-MTase activity. The SUMO-interacting motif (SIM) stretch occupies residues valine 2593–leucine 2596. S-adenosyl-L-methionine is bound by residues glycine 2602, tryptophan 2603, threonine 2620, lysine 2621, histidine 2626, glutamate 2627, aspartate 2647, valine 2648, aspartate 2662, and isoleucine 2663. The active-site For 2'-O-MTase activity is aspartate 2662. A GTP-binding site is contributed by glutamate 2665 to glutamate 2671. Position 2666 (serine 2666) interacts with mRNA. The active-site For 2'-O-MTase activity is lysine 2698. MRNA is bound by residues arginine 2729 and serine 2731. Position 2729–2731 (arginine 2729–serine 2731) interacts with GTP. Catalysis depends on glutamate 2734, which acts as the For 2'-O-MTase activity. Tyrosine 2736 lines the S-adenosyl-L-methionine pocket. A Nuclear localization signal (NLS) motif is present at residues lysine 2904–valine 2910. 4 residues coordinate Zn(2+): glutamate 2955, histidine 2959, cysteine 2964, and cysteine 2967. Residues glycine 3045–alanine 3195 form the RdRp catalytic domain. Zn(2+) contacts are provided by histidine 3230, cysteine 3246, and cysteine 3365.

This sequence in the N-terminal section; belongs to the class I-like SAM-binding methyltransferase superfamily. mRNA cap 0-1 NS5-type methyltransferase family. As to quaternary structure, homodimer. Interacts with host SERTAD3; this interaction promotes capsid protein C degradation. Interacts with host CAPRIN1; this interaction is probably linked to the inhibition of stress granules formation by the virus. Interacts with host G3BP1; this interaction is probably linked to the inhibition of stress granules formation by the virus. Forms heterodimers with envelope protein E in the endoplasmic reticulum and Golgi. Interacts with non-structural protein 2A. In terms of assembly, homodimer; in the endoplasmic reticulum and Golgi. Interacts with host TYRO3, AXL and DC-SIGN proteins. Interacts with non-structural protein 2A. Interacts with host HAVCR1; this interaction likely mediates virus attachment to host cell. Interacts with host NCAM1. Interacts with host HSPA5. Interacts with Aedes aegypti SRPN25, APY and venom allergen-1 salivary proteins; the interactions do not affect Zika virus replication in human endothelial cells and keratinocytes. As to quaternary structure, homodimer; Homohexamer when secreted. Interacts with host TBK1. Interacts with host USP8. Interacts with envelope protein E. Interacts with host HSPA5. Interacts with the structural protein prM/E complex, and the NS2B/NS3 protease complex. In terms of assembly, forms a heterodimer with serine protease NS3. May form homooligomers. Interacts with human SPCS1. Interacts with non-structural protein 2A. As to quaternary structure, forms a heterodimer with NS2B. Interacts with NS4B. Interacts with unphosphorylated RNA-directed RNA polymerase NS5; this interaction stimulates RNA-directed RNA polymerase NS5 guanylyltransferase activity. Interacts with non-structural protein 2A. Interacts with host SHFL; this interaction promotes NS3 degradation via a lysosome-dependent pathway. Interacts with host CEP63; this interaction disorganizes the centrosome and inhibits host innate immune response. May interact with host ANKLE2; the interaction may cause defects in brain development, such as microcephaly. May interact with host SRPRA and SEC61G. In terms of assembly, interacts with serine protease NS3. Interacts with NS1. Interacts with host TBK1. As to quaternary structure, homodimer. Interacts with host STAT2; this interaction inhibits the phosphorylation of the latter, and, when all viral proteins are present (polyprotein), targets STAT2 for degradation. Interacts with host TBK1 and IKBKE; these interactions lead to the inhibition of the host RIG-I signaling pathway. Interacts with host KPNA2. Interacts with host PAF1 complex; the interaction may prevent the recruitment of the host PAF1 complex to interferon-responsive genes, and thus reduces the immune response. Interacts with serine protease NS3. Interacts with host ZSWIM8; this interaction allows STAT2 binding to ZSWIM8 and subsequent proteasomal degradation leading to inhibition of interferon signaling. In terms of processing, specific enzymatic cleavages in vivo yield mature proteins. Cleavages in the lumen of endoplasmic reticulum are performed by host signal peptidase, whereas cleavages in the cytoplasmic side are performed by serine protease NS3. Signal cleavage at the 2K-4B site requires a prior NS3 protease-mediated cleavage at the 4A-2K site. Cleaved in post-Golgi vesicles by a host furin, releasing the mature small envelope protein M, and peptide pr. This cleavage is incomplete as up to 30% of viral particles still carry uncleaved prM. Post-translationally, N-glycosylation plays a role in virulence in mammalian and mosquito hosts, but may have no effect on neurovirulence. In terms of processing, ubiquitination by host TRIM7 promotes virus attachment and fusion of the virus and the host endosome membrane. N-glycosylated. The excreted form is glycosylated, which is required for efficient secretion of the protein from infected cells. Post-translationally, acetylated by host KAT5. Acetylation modulates NS3 RNA-binding and unwinding activities and plays an important positive role for viral replication. In terms of processing, phosphorylated on serines residues. This phosphorylation may trigger NS5 nuclear localization. Sumoylated, required for regulating IFN induced interferon stimulated genes/ISGs.

It localises to the virion. Its subcellular location is the host nucleus. The protein resides in the host cytoplasm. It is found in the host perinuclear region. The protein localises to the secreted. It localises to the virion membrane. Its subcellular location is the host endoplasmic reticulum membrane. It carries out the reaction Selective hydrolysis of -Xaa-Xaa-|-Yaa- bonds in which each of the Xaa can be either Arg or Lys and Yaa can be either Ser or Ala.. The enzyme catalyses RNA(n) + a ribonucleoside 5'-triphosphate = RNA(n+1) + diphosphate. The catalysed reaction is a ribonucleoside 5'-triphosphate + H2O = a ribonucleoside 5'-diphosphate + phosphate + H(+). It catalyses the reaction ATP + H2O = ADP + phosphate + H(+). It carries out the reaction a 5'-end (5'-triphosphoguanosine)-ribonucleoside in mRNA + S-adenosyl-L-methionine = a 5'-end (N(7)-methyl 5'-triphosphoguanosine)-ribonucleoside in mRNA + S-adenosyl-L-homocysteine. The enzyme catalyses a 5'-end (N(7)-methyl 5'-triphosphoguanosine)-ribonucleoside in mRNA + S-adenosyl-L-methionine = a 5'-end (N(7)-methyl 5'-triphosphoguanosine)-(2'-O-methyl-ribonucleoside) in mRNA + S-adenosyl-L-homocysteine + H(+). Functionally, plays a role in virus budding by binding to the host cell membrane and packages the viral RNA into a nucleocapsid that forms the core of the mature virus particle. During virus entry, may induce genome penetration into the host cytoplasm after hemifusion induced by the surface proteins. Can migrate to the cell nucleus where it modulates host functions. Inhibits the integrated stress response (ISR) in the infected cell. Inhibits RNA silencing by interfering with host Dicer. In terms of biological role, prevents premature fusion activity of envelope proteins in trans-Golgi by binding to envelope protein E at pH 6.0. After virion release in extracellular space, gets dissociated from E dimers. Its function is as follows. Plays a role in host immune defense modulation and protection of envelope protein E during virion synthesis. PrM-E cleavage is inefficient, many virions are only partially matured and immature prM-E proteins could play a role in immune evasion. Contributes to fetal microcephaly in humans. Acts as a chaperone for envelope protein E during intracellular virion assembly by masking and inactivating envelope protein E fusion peptide. prM is the only viral peptide matured by host furin in the trans-Golgi network probably to avoid catastrophic activation of the viral fusion activity in acidic Golgi compartment prior to virion release. Functionally, may play a role in virus budding. Exerts cytotoxic effects by activating a mitochondrial apoptotic pathway through M ectodomain. May display a viroporin activity. Binds to host cell surface receptors and mediates fusion between viral and cellular membranes. Efficient virus attachment to cell is, at least in part, mediated by host HAVCR1 in a cell-type specific manner. In addition, host NCAM1 can also be used as entry receptor. Interaction with host HSPA5 plays an important role in the early stages of infection as well. Envelope protein is synthesized in the endoplasmic reticulum and forms a heterodimer with protein prM. The heterodimer plays a role in virion budding in the ER, and the newly formed immature particle is covered with 60 spikes composed of heterodimers between precursor prM and envelope protein E. The virion is transported to the Golgi apparatus where the low pH causes the dissociation of PrM-E heterodimers and formation of E homodimers. PrM-E cleavage is inefficient, many virions are only partially matured and immature prM-E proteins could play a role in immune evasion. In terms of biological role, plays a role in the inhibition of host RLR-induced interferon-beta activation by targeting TANK-binding kinase 1/TBK1. In addition, recruits the host deubiquitinase USP8 to cleave 'Lys-11'-linked polyubiquitin chains from caspase-1/CASP1 thus inhibiting its proteasomal degradation. In turn, stabilized CASP1 promotes cleavage of cGAS, which inhibits its ability to recognize mitochondrial DNA release and initiate type I interferon signaling. Its function is as follows. Component of the viral RNA replication complex that recruits genomic RNA, the structural protein prM/E complex, and the NS2B/NS3 protease complex to the virion assembly site and orchestrates virus morphogenesis. Antagonizes also the host MDA5-mediated induction of alpha/beta interferon antiviral response. May disrupt adherens junction formation and thereby impair proliferation of radial cells in the host cortex. Functionally, required cofactor for the serine protease function of NS3. Displays three enzymatic activities: serine protease, NTPase and RNA helicase. NS3 serine protease, in association with NS2B, performs its autocleavage and cleaves the polyprotein at dibasic sites in the cytoplasm: C-prM, NS2A-NS2B, NS2B-NS3, NS3-NS4A, NS4A-2K and NS4B-NS5. NS3 RNA helicase binds RNA and unwinds dsRNA in the 3' to 5' direction. Leads to translation arrest when expressed ex vivo. Disrupts host centrosome organization in a CEP63-dependent manner to degrade host TBK1 and inhibits innate immune response. Inhibits the integrated stress response (ISR) in the infected cell. In terms of biological role, regulates the ATPase activity of the NS3 helicase activity. NS4A allows NS3 helicase to conserve energy during unwinding. Cooperatively with NS4B suppresses the Akt-mTOR pathway and leads to cellular dysregulation. By inhibiting host ANKLE2 functions, may cause defects in brain development, such as microcephaly. Also antagonizes the host MDA5-mediated induction of alpha/beta interferon antiviral response. Inhibits the integrated stress response (ISR) in the infected cell. Its function is as follows. Functions as a signal peptide for NS4B and is required for the interferon antagonism activity of the latter. Functionally, induces the formation of ER-derived membrane vesicles where the viral replication takes place. Also plays a role in the inhibition of host RLR-induced interferon-beta production at TANK-binding kinase 1/TBK1 level. Cooperatively with NS4A suppresses the Akt-mTOR pathway and leads to cellular dysregulation. Replicates the viral (+) and (-) RNA genome, and performs the capping of genomes in the cytoplasm. Methylates viral RNA cap at guanine N-7 and ribose 2'-O positions. Once sufficient NS5 is expressed, binds to the cap-proximal structure and inhibits further translation of the viral genome. Besides its role in RNA genome replication, also prevents the establishment of a cellular antiviral state by blocking the interferon-alpha/beta (IFN-alpha/beta) signaling pathway. Mechanistically, interferes with host kinases TBK1 and IKKE upstream of interferon regulatory factor 3/IRF3 to inhibit the RIG-I pathway. Also antagonizes type I interferon signaling by targeting STAT2 for degradation by the proteasome thereby preventing activation of JAK-STAT signaling pathway. Mechanistically, acts as a scaffold protein to connect host ZSWIM8/CUL3 ligase complex and STAT2, leading to STAT2 degradation. Within the host nucleus, disrupts host SUMO1 and STAT2 co-localization with PML, resulting in PML degradation. May also reduce immune responses by preventing the recruitment of the host PAF1 complex to interferon-responsive genes. In Aedes aegypti (Yellowfever mosquito), this protein is Genome polyprotein.